Here is a 385-residue protein sequence, read N- to C-terminus: cAMP-dependent protein kinase, catalytic subunit-like (385 aa).

Positions 63 to 317 constitute a Protein kinase domain; the sequence is LERIVTIGKG…TQDVKDHKWF (255 aa). ATP contacts are provided by residues 69-77 and lysine 92; that span reads IGKGTFGRV. Aspartate 186 (proton acceptor) is an active-site residue. In terms of domain architecture, AGC-kinase C-terminal spans 318–385; sequence EKVNWDDTLH…QRERDLFAEW (68 aa).

It belongs to the protein kinase superfamily. Ser/Thr protein kinase family. cAMP subfamily.

The enzyme catalyses L-seryl-[protein] + ATP = O-phospho-L-seryl-[protein] + ADP + H(+). The catalysed reaction is L-threonyl-[protein] + ATP = O-phospho-L-threonyl-[protein] + ADP + H(+). The polypeptide is cAMP-dependent protein kinase, catalytic subunit-like (Caenorhabditis briggsae).